The sequence spans 331 residues: Protein-methionine-sulfoxide reductase catalytic subunit MsrP (331 aa).

The tat-type signal signal peptide spans 1-57 (MLIKKTLRAALAGDDIPRSEITPRAVFEHRRRILQAAGAAAAGGLVGAHGLALAAYA). Mo-molybdopterin-binding positions include N90, 93–94 (YE), C148, T183, N231, R236, and 247–249 (SAK).

Belongs to the MsrP family. As to quaternary structure, heterodimer of a catalytic subunit (MsrP) and a heme-binding subunit (MsrQ). Mo-molybdopterin serves as cofactor. Post-translationally, predicted to be exported by the Tat system. The position of the signal peptide cleavage has not been experimentally proven.

The protein localises to the periplasm. The enzyme catalyses L-methionyl-[protein] + a quinone + H2O = L-methionyl-(S)-S-oxide-[protein] + a quinol. It catalyses the reaction L-methionyl-[protein] + a quinone + H2O = L-methionyl-(R)-S-oxide-[protein] + a quinol. Functionally, part of the MsrPQ system that repairs oxidized periplasmic proteins containing methionine sulfoxide residues (Met-O), using respiratory chain electrons. Thus protects these proteins from oxidative-stress damage caused by reactive species of oxygen and chlorine generated by the host defense mechanisms. MsrPQ is essential for the maintenance of envelope integrity under bleach stress, rescuing a wide series of structurally unrelated periplasmic proteins from methionine oxidation. The catalytic subunit MsrP is non-stereospecific, being able to reduce both (R-) and (S-) diastereoisomers of methionine sulfoxide. In Burkholderia mallei (strain ATCC 23344), this protein is Protein-methionine-sulfoxide reductase catalytic subunit MsrP.